The following is a 352-amino-acid chain: uncharacterized protein (352 aa).

The disordered stretch occupies residues 1-40 (MTSTMKLFTDHAEISVRERPPQRNNNNQEQDNSNRPAPRR). Residues 8-21 (FTDHAEISVRERPP) are compositionally biased toward basic and acidic residues. Over residues 22 to 36 (QRNNNNQEQDNSNRP) the composition is skewed to low complexity. A helical membrane pass occupies residues 317–333 (MTITLPCGLTIAFFVYY).

It is found in the host cell membrane. This is an uncharacterized protein from Diadromus pulchellus idnoreovirus 1 (DpIRV-1).